The sequence spans 432 residues: Adenylosuccinate synthetase (432 aa).

GTP is bound by residues 12 to 18 and 40 to 42; these read GDEGKGK and GHT. Aspartate 13 (proton acceptor) is an active-site residue. Aspartate 13 and glycine 40 together coordinate Mg(2+). Residues 13–16, 38–41, threonine 132, arginine 146, glutamine 226, threonine 241, and arginine 305 each bind IMP; these read DEGK and NAGH. The active-site Proton donor is the histidine 41. 301–307 is a binding site for substrate; sequence VVTGRKR. GTP is bound by residues arginine 307, 333–335, and 415–417; these read KLD and STS.

Belongs to the adenylosuccinate synthetase family. In terms of assembly, homodimer. It depends on Mg(2+) as a cofactor.

Its subcellular location is the cytoplasm. The enzyme catalyses IMP + L-aspartate + GTP = N(6)-(1,2-dicarboxyethyl)-AMP + GDP + phosphate + 2 H(+). It functions in the pathway purine metabolism; AMP biosynthesis via de novo pathway; AMP from IMP: step 1/2. In terms of biological role, plays an important role in the de novo pathway of purine nucleotide biosynthesis. Catalyzes the first committed step in the biosynthesis of AMP from IMP. This Rhizobium leguminosarum bv. trifolii (strain WSM2304) protein is Adenylosuccinate synthetase.